A 34-amino-acid chain; its full sequence is Photosystem II reaction center protein M (34 aa).

Residues 5–25 (ILGLIATTLFILIPTSFLLIL) form a helical membrane-spanning segment.

It belongs to the PsbM family. As to quaternary structure, PSII is composed of 1 copy each of membrane proteins PsbA, PsbB, PsbC, PsbD, PsbE, PsbF, PsbH, PsbI, PsbJ, PsbK, PsbL, PsbM, PsbT, PsbX, PsbY, PsbZ, Psb30/Ycf12, at least 3 peripheral proteins of the oxygen-evolving complex and a large number of cofactors. It forms dimeric complexes.

It localises to the plastid. Its subcellular location is the chloroplast thylakoid membrane. One of the components of the core complex of photosystem II (PSII). PSII is a light-driven water:plastoquinone oxidoreductase that uses light energy to abstract electrons from H(2)O, generating O(2) and a proton gradient subsequently used for ATP formation. It consists of a core antenna complex that captures photons, and an electron transfer chain that converts photonic excitation into a charge separation. This subunit is found at the monomer-monomer interface. This Pleurastrum terricola (Filamentous green alga) protein is Photosystem II reaction center protein M.